Here is a 309-residue protein sequence, read N- to C-terminus: Aspartate carbamoyltransferase catalytic subunit (309 aa).

The carbamoyl phosphate site is built by R54 and T55. Residue K82 participates in L-aspartate binding. The carbamoyl phosphate site is built by R104, H132, and Q135. R165 and R219 together coordinate L-aspartate. The carbamoyl phosphate site is built by G260 and P261.

The protein belongs to the aspartate/ornithine carbamoyltransferase superfamily. ATCase family. In terms of assembly, heterododecamer (2C3:3R2) of six catalytic PyrB chains organized as two trimers (C3), and six regulatory PyrI chains organized as three dimers (R2).

The enzyme catalyses carbamoyl phosphate + L-aspartate = N-carbamoyl-L-aspartate + phosphate + H(+). The protein operates within pyrimidine metabolism; UMP biosynthesis via de novo pathway; (S)-dihydroorotate from bicarbonate: step 2/3. In terms of biological role, catalyzes the condensation of carbamoyl phosphate and aspartate to form carbamoyl aspartate and inorganic phosphate, the committed step in the de novo pyrimidine nucleotide biosynthesis pathway. This chain is Aspartate carbamoyltransferase catalytic subunit, found in Parafrankia sp. (strain EAN1pec).